A 156-amino-acid polypeptide reads, in one-letter code: Small ribosomal subunit protein uS7 (156 aa).

The protein belongs to the universal ribosomal protein uS7 family. Part of the 30S ribosomal subunit. Contacts proteins S9 and S11.

In terms of biological role, one of the primary rRNA binding proteins, it binds directly to 16S rRNA where it nucleates assembly of the head domain of the 30S subunit. Is located at the subunit interface close to the decoding center, probably blocks exit of the E-site tRNA. The protein is Small ribosomal subunit protein uS7 of Synechococcus sp. (strain JA-2-3B'a(2-13)) (Cyanobacteria bacterium Yellowstone B-Prime).